A 179-amino-acid polypeptide reads, in one-letter code: UPF0227 protein Sbal_2415 (179 aa).

The protein belongs to the UPF0227 family.

In Shewanella baltica (strain OS155 / ATCC BAA-1091), this protein is UPF0227 protein Sbal_2415.